The chain runs to 275 residues: Mitochondrial prohibitin complex protein 1 (275 aa).

Residues 180 to 213 are a coiled coil; sequence REFTEAVEMKQVAQQEAEKARYLVEKAEQMKIAA.

It belongs to the prohibitin family. High molecular weight complex that consist of phb-1 and phb-2.

It localises to the mitochondrion inner membrane. PHB proteins are essential during embryonic development and are required for somatic and germline differentiation in the larval gonad. A deficiency in PHB proteins results in altered mitochondrial biogenesis in body wall muscle cells. The polypeptide is Mitochondrial prohibitin complex protein 1 (phb-1) (Caenorhabditis elegans).